The primary structure comprises 616 residues: Protein LNK1 (616 aa).

Disordered stretches follow at residues 72–112 (GKNP…HGFN), 361–398 (ESKSGIKSENKPSPSSASNESYTSNHAQSIESLQGPTV), 410–434 (ANLLPGQDMPPSFAANTKKSSKTDS), and 567–616 (SSLS…SDNN). The segment covering 371–395 (KPSPSSASNESYTSNHAQSIESLQG) has biased composition (polar residues). Residues 567 to 577 (SSLSSDNNVLS) are compositionally biased toward low complexity. The segment covering 594 to 608 (RIEKQEETTELRPEA) has biased composition (basic and acidic residues).

In terms of assembly, interacts with CCA1, LHY, REV4 and REV8, but not with PRR7 or PRR9. In terms of tissue distribution, expressed in roots, stems, leaves, seedlings, cotyledons, inflorescences and siliques. Highest expression in root tips, young leaves and vasculatur tissues.

The protein localises to the nucleus. In terms of biological role, transcriptional coactivator necessary for expression of the clock genes PRR5 and TOC1. Antagonizes REV8 function in the regulation of anthocyanin accumulation. Involved in red light input to the clock. Activates clock-controlled genes with afternoon peak. Mediates light inhibition of hypocotyl elongation. This Arabidopsis thaliana (Mouse-ear cress) protein is Protein LNK1.